A 148-amino-acid polypeptide reads, in one-letter code: Protein-export protein SecB (148 aa).

Belongs to the SecB family. Homotetramer, a dimer of dimers. One homotetramer interacts with 1 SecA dimer.

It is found in the cytoplasm. In terms of biological role, one of the proteins required for the normal export of preproteins out of the cell cytoplasm. It is a molecular chaperone that binds to a subset of precursor proteins, maintaining them in a translocation-competent state. It also specifically binds to its receptor SecA. This is Protein-export protein SecB from Psychrobacter arcticus (strain DSM 17307 / VKM B-2377 / 273-4).